Consider the following 617-residue polypeptide: Thioredoxin reductase (617 aa).

Residues 127-128, 147-150, 163-164, 168-172, A237, D433, and 440-442 contribute to the FAD site; these read PG, DYVK, TC, GCVPK, and ELA. Cysteines 164 and 169 form a disulfide. The tract at residues 514–528 is loop important for the interaction with TRX1; it reads HRQKHIRAQKDEYDL. An FAD-binding site is contributed by H585. H585 functions as the Proton acceptor in the catalytic mechanism. The cysteines at positions 611 and 616 are disulfide-linked.

This sequence belongs to the class-I pyridine nucleotide-disulfide oxidoreductase family. As to quaternary structure, homodimer. The cofactor is FAD.

The protein localises to the mitochondrion. The protein resides in the cytoplasm. The enzyme catalyses [thioredoxin]-dithiol + NADP(+) = [thioredoxin]-disulfide + NADPH + H(+). Its function is as follows. Catalyzes the transfer of electrons from NADPH to thioredoxins TRX1, TRX2 and TRX3, which in turn act as reductants of disulfide containing proteins. Able to reduce nitroglutathione (GSNO), a compound involved in the transport of nitric oxide (NO); however, TRX1 is more efficient in reducing GSNO. Has no catalytic activity towards oxidized glutathione (GSSG). This is Thioredoxin reductase from Plasmodium falciparum (isolate 3D7).